The primary structure comprises 345 residues: GMP reductase 1 (345 aa).

26 to 27 serves as a coordination point for NADP(+); it reads SR. Position 28 is a phosphoserine (S28). NADP(+)-binding positions include K78, 129–131, and 180–181; these read DVA and VG. G181, G183, and C186 together coordinate K(+). The Thioimidate intermediate role is filled by C186. T188 acts as the Proton donor/acceptor in catalysis. R189 provides a ligand contact to K(+). Residues 242-243, 268-270, and 286-290 each bind GMP; these read GG, GMS, and RASEG. NADP(+)-binding positions include M269, 285-286, and 314-317; these read YR and STCT.

It belongs to the IMPDH/GMPR family. GuaC type 1 subfamily. Homotetramer.

The catalysed reaction is IMP + NH4(+) + NADP(+) = GMP + NADPH + 2 H(+). Catalyzes the irreversible NADPH-dependent deamination of GMP to IMP. It functions in the conversion of nucleobase, nucleoside and nucleotide derivatives of G to A nucleotides, and in maintaining the intracellular balance of A and G nucleotides. The polypeptide is GMP reductase 1 (Gmpr) (Rattus norvegicus (Rat)).